The following is a 214-amino-acid chain: Adenylate kinase (214 aa).

10–15 (GAGKGT) is an ATP binding site. The tract at residues 30–59 (STGDMLRAAVKAGTPLGLEAKKVMDAGQLV) is NMP. AMP-binding positions include Thr-31, Arg-36, 57 to 59 (QLV), 85 to 88 (GFPR), and Gln-92. Residues 122–159 (GRRVHSGSGRVYHVVFNPPKVEGKDDVTGEDLSIRPDD) are LID. Residues Arg-123 and 132-133 (VY) each bind ATP. Residues Arg-156 and Arg-167 each coordinate AMP. Gln-200 serves as a coordination point for ATP.

Belongs to the adenylate kinase family. Monomer.

The protein resides in the cytoplasm. It catalyses the reaction AMP + ATP = 2 ADP. Its pathway is purine metabolism; AMP biosynthesis via salvage pathway; AMP from ADP: step 1/1. Its function is as follows. Catalyzes the reversible transfer of the terminal phosphate group between ATP and AMP. Plays an important role in cellular energy homeostasis and in adenine nucleotide metabolism. The protein is Adenylate kinase of Shewanella denitrificans (strain OS217 / ATCC BAA-1090 / DSM 15013).